Consider the following 135-residue polypeptide: ATP synthase epsilon chain (135 aa).

Belongs to the ATPase epsilon chain family. As to quaternary structure, F-type ATPases have 2 components, CF(1) - the catalytic core - and CF(0) - the membrane proton channel. CF(1) has five subunits: alpha(3), beta(3), gamma(1), delta(1), epsilon(1). CF(0) has three main subunits: a, b and c.

It localises to the cell inner membrane. Its function is as follows. Produces ATP from ADP in the presence of a proton gradient across the membrane. This Granulibacter bethesdensis (strain ATCC BAA-1260 / CGDNIH1) protein is ATP synthase epsilon chain.